We begin with the raw amino-acid sequence, 683 residues long: Capsid polyprotein VP90 (683 aa).

Residues 1–13 are compositionally biased toward low complexity; sequence MAGGATAPAGAKP. Disordered stretches follow at residues 1–45 and 391–413; these read MAGG…KQEL and PNAESNNLPPPTTGAQPQPQPPA. Over residues 14–39 the composition is skewed to basic residues; sequence KQPKQKQKKPSSQARKKPSQKQKAMK. The span at 398-413 shows a compositional bias: pro residues; that stretch reads LPPPTTGAQPQPQPPA.

It belongs to the astroviridae capsid polyprotein family. In terms of processing, specific enzymatic cleavages by the host yield mature proteins.

Its subcellular location is the virion. Self-assembles to form an icosahedral T=3 immature capsid. The chain is Capsid polyprotein VP90 from Gallus gallus (Chicken).